The chain runs to 92 residues: Small ribosomal subunit protein bS20 (92 aa).

It belongs to the bacterial ribosomal protein bS20 family.

In terms of biological role, binds directly to 16S ribosomal RNA. This chain is Small ribosomal subunit protein bS20, found in Persephonella marina (strain DSM 14350 / EX-H1).